Reading from the N-terminus, the 251-residue chain is Ubiquinone/menaquinone biosynthesis C-methyltransferase UbiE (251 aa).

S-adenosyl-L-methionine contacts are provided by residues Thr74, Asp95, and 123–124 (NA).

This sequence belongs to the class I-like SAM-binding methyltransferase superfamily. MenG/UbiE family.

It carries out the reaction a 2-demethylmenaquinol + S-adenosyl-L-methionine = a menaquinol + S-adenosyl-L-homocysteine + H(+). The catalysed reaction is a 2-methoxy-6-(all-trans-polyprenyl)benzene-1,4-diol + S-adenosyl-L-methionine = a 5-methoxy-2-methyl-3-(all-trans-polyprenyl)benzene-1,4-diol + S-adenosyl-L-homocysteine + H(+). It functions in the pathway quinol/quinone metabolism; menaquinone biosynthesis; menaquinol from 1,4-dihydroxy-2-naphthoate: step 2/2. Its pathway is cofactor biosynthesis; ubiquinone biosynthesis. In terms of biological role, methyltransferase required for the conversion of demethylmenaquinol (DMKH2) to menaquinol (MKH2) and the conversion of 2-polyprenyl-6-methoxy-1,4-benzoquinol (DDMQH2) to 2-polyprenyl-3-methyl-6-methoxy-1,4-benzoquinol (DMQH2). The polypeptide is Ubiquinone/menaquinone biosynthesis C-methyltransferase UbiE (Shewanella oneidensis (strain ATCC 700550 / JCM 31522 / CIP 106686 / LMG 19005 / NCIMB 14063 / MR-1)).